We begin with the raw amino-acid sequence, 1364 residues long: Kinectin (1364 aa).

The Cytoplasmic segment spans residues 1 to 6 (MEFYES). A helical; Signal-anchor for type II membrane protein transmembrane segment spans residues 7–29 (TYFIILIPSVVITVIFLFFWLFM). Over 30 to 1364 (KETLYDEVLA…KGREHYQLVE (1335 aa)) the chain is Lumenal. 4 stretches are compositionally biased toward basic and acidic residues: residues 46–56 (KFPPTKSDKKK), 73–86 (HESD…DFKL), 121–135 (QKAA…ESEG), and 170–179 (QKNDDQDTKT). Positions 46-207 (KFPPTKSDKK…VKQENVSGKK (162 aa)) are disordered. Asparagine 202, asparagine 267, asparagine 623, asparagine 638, asparagine 704, asparagine 775, asparagine 976, asparagine 1061, asparagine 1088, and asparagine 1094 each carry an N-linked (GlcNAc...) asparagine glycan. Positions 315–1085 (KASKAESAAA…VETRELLQKL (771 aa)) form a coiled coil. Residues 1116 to 1306 (SGSEDIKVME…ASLEREIGKV (191 aa)) adopt a coiled-coil conformation.

Belongs to the kinectin family. In terms of assembly, parallel homodimers formed between the membrane-bound and the cytosolic form, and also between 2 cytosolic forms. Both the membrane and cytoplasmic forms seem to be myristoylated.

The protein resides in the endoplasmic reticulum membrane. Its function is as follows. Receptor for kinesin thus involved in kinesin-driven vesicle motility. The protein is Kinectin (KTN1) of Gallus gallus (Chicken).